Here is an 883-residue protein sequence, read N- to C-terminus: Alanine--tRNA ligase (883 aa).

4 residues coordinate Zn(2+): histidine 563, histidine 567, cysteine 677, and histidine 681.

The protein belongs to the class-II aminoacyl-tRNA synthetase family. It depends on Zn(2+) as a cofactor.

It is found in the cytoplasm. The catalysed reaction is tRNA(Ala) + L-alanine + ATP = L-alanyl-tRNA(Ala) + AMP + diphosphate. In terms of biological role, catalyzes the attachment of alanine to tRNA(Ala) in a two-step reaction: alanine is first activated by ATP to form Ala-AMP and then transferred to the acceptor end of tRNA(Ala). Also edits incorrectly charged Ser-tRNA(Ala) and Gly-tRNA(Ala) via its editing domain. The protein is Alanine--tRNA ligase of Cereibacter sphaeroides (strain ATCC 17029 / ATH 2.4.9) (Rhodobacter sphaeroides).